The following is a 536-amino-acid chain: Cytochrome c oxidase subunit 1 (536 aa).

A helical membrane pass occupies residues 19–39 (IGMTYLGFGMLSAMMGTGMSV). Residue Glu44 coordinates Ca(2+). His67 is a binding site for Fe(II)-heme a. The next 6 helical transmembrane spans lie at 69-89 (LLMM…NFFL), 103-123 (LNNI…CSVL), 152-172 (AMFA…NFMV), 188-208 (PLFA…LPVL), 240-260 (LFWF…FGVM), and 273-293 (FGEM…FLVW). His246 lines the Cu cation pocket. A cross-link (1'-histidyl-3'-tyrosine (His-Tyr)) is located at residues 246 to 250 (HPEVY). Tyr250 is an O2 binding site. Cu cation contacts are provided by His295 and His296. 2 helical membrane-spanning segments follow: residues 315-335 (MVIA…IYGG) and 341-361 (VPML…LTGV). His373 and Asp374 together coordinate Mg(2+). His381 is a binding site for heme a3. A Fe(II)-heme a-binding site is contributed by His383. 2 helical membrane passes run 388-408 (MGAL…MFGL) and 418-438 (HFWL…FLGL). Residue Pro446 coordinates Ca(2+). The chain crosses the membrane as a helical span at residues 461-481 (MGSAMSVMSVLVGLKSVLVQL).

The protein belongs to the heme-copper respiratory oxidase family. In terms of assembly, component of the cytochrome c oxidase (complex IV, CIV), a multisubunit enzyme composed of a catalytic core of 3 subunits and several supernumerary subunits. The complex exists as a monomer or a dimer and forms supercomplexes (SCs) in the inner mitochondrial membrane with ubiquinol-cytochrome c oxidoreductase (cytochrome b-c1 complex, complex III, CIII). Heme serves as cofactor. Requires Cu cation as cofactor.

The protein localises to the mitochondrion inner membrane. It catalyses the reaction 4 Fe(II)-[cytochrome c] + O2 + 8 H(+)(in) = 4 Fe(III)-[cytochrome c] + 2 H2O + 4 H(+)(out). Its pathway is energy metabolism; oxidative phosphorylation. In terms of biological role, component of the cytochrome c oxidase, the last enzyme in the mitochondrial electron transport chain which drives oxidative phosphorylation. The respiratory chain contains 3 multisubunit complexes succinate dehydrogenase (complex II, CII), ubiquinol-cytochrome c oxidoreductase (cytochrome b-c1 complex, complex III, CIII) and cytochrome c oxidase (complex IV, CIV), that cooperate to transfer electrons derived from NADH and succinate to molecular oxygen, creating an electrochemical gradient over the inner membrane that drives transmembrane transport and the ATP synthase. Cytochrome c oxidase is the component of the respiratory chain that catalyzes the reduction of oxygen to water. Electrons originating from reduced cytochrome c in the intermembrane space (IMS) are transferred via the dinuclear copper A center (CU(A)) of subunit 2 and heme A of subunit 1 to the active site in subunit 1, a binuclear center (BNC) formed by heme A3 and copper B (CU(B)). The BNC reduces molecular oxygen to 2 water molecules using 4 electrons from cytochrome c in the IMS and 4 protons from the mitochondrial matrix. This chain is Cytochrome c oxidase subunit 1 (COX1), found in Debaryomyces hansenii (strain ATCC 36239 / CBS 767 / BCRC 21394 / JCM 1990 / NBRC 0083 / IGC 2968) (Yeast).